The primary structure comprises 192 residues: Erythropoietin (192 aa).

The signal sequence occupies residues 1–26 (MGVPDCLALPLLVTFLLLSLGLPVLG). Cys-33 and Cys-187 form a disulfide bridge. Residues Asn-50, Asn-64, and Asn-109 are each glycosylated (N-linked (GlcNAc...) asparagine).

Belongs to the EPO/TPO family.

The protein resides in the secreted. Hormone involved in the regulation of erythrocyte proliferation and differentiation and the maintenance of a physiological level of circulating erythrocyte mass. Binds to EPOR leading to EPOR dimerization and JAK2 activation thereby activating specific downstream effectors, including STAT1 and STAT3. The polypeptide is Erythropoietin (EPO) (Nannospalax galili (Northern Israeli blind subterranean mole rat)).